The sequence spans 973 residues: Mediator of RNA polymerase II transcription subunit 16 (973 aa).

Belongs to the Mediator complex subunit 16 family. As to quaternary structure, component of the Mediator complex.

Its subcellular location is the nucleus. Its function is as follows. Component of the Mediator complex, a coactivator involved in the regulated transcription of nearly all RNA polymerase II-dependent genes. Mediator functions as a bridge to convey information from gene-specific regulatory proteins to the basal RNA polymerase II transcription machinery. Mediator is recruited to promoters by direct interactions with regulatory proteins and serves as a scaffold for the assembly of a functional preinitiation complex with RNA polymerase II and the general transcription factors. The protein is Mediator of RNA polymerase II transcription subunit 16 (SIN4) of Candida glabrata (strain ATCC 2001 / BCRC 20586 / JCM 3761 / NBRC 0622 / NRRL Y-65 / CBS 138) (Yeast).